A 706-amino-acid polypeptide reads, in one-letter code: Glycylpeptide N-tetradecanoyltransferase (706 aa).

The disordered stretch occupies residues 1–119 (MSGIAGTSQD…LASGSSREGK (119 aa)). The segment covering 7-42 (TSQDTSVAASASSSSTRPAAASSSIAPPSPSLTTAP) has biased composition (low complexity). Residues 47 to 65 (EQDDDDDQENDDEEEEEEG) show a composition bias toward acidic residues. Over residues 78 to 95 (KQRKKKKSKAAAKLRKKL) the composition is skewed to basic residues. Tetradecanoyl-CoA contacts are provided by residues 180 to 183 (HKFW), 317 to 319 (LCV), and 325 to 329 (SKRLA). The Proton acceptor; via carboxylate role is filled by valine 706.

Belongs to the NMT family. As to quaternary structure, monomer.

The protein resides in the cytoplasm. It carries out the reaction N-terminal glycyl-[protein] + tetradecanoyl-CoA = N-tetradecanoylglycyl-[protein] + CoA + H(+). Its function is as follows. Adds a myristoyl group to the N-terminal glycine residue of certain cellular proteins. The chain is Glycylpeptide N-tetradecanoyltransferase (NMT1) from Mycosarcoma maydis (Corn smut fungus).